The chain runs to 832 residues: Protein P (832 aa).

The interval 1 to 177 is terminal protein domain (TP); sequence MPLSCPHFRK…FCGSPYSWEQ (177 aa). Residues 178–335 are spacer; that stretch reads ELQHGAEPVC…YCLSHLVNLL (158 aa). Residues 208-224 are compositionally biased toward low complexity; it reads KQSRLGLQSQQRQLARS. The disordered stretch occupies residues 208 to 241; the sequence is KQSRLGLQSQQRQLARSHQGRSGSIRARVHSTTR. Residues 336 to 679 form a polymerase/reverse transcriptase domain (RT) region; sequence EDWGPCTEHG…YLTLYPVARQ (344 aa). The Reverse transcriptase domain occupies 346–589; the sequence is EHHIRIPRTP…YSLNFMGYII (244 aa). Mg(2+)-binding residues include aspartate 418, aspartate 540, and aspartate 541.

The protein belongs to the hepadnaviridae P protein family.

The enzyme catalyses DNA(n) + a 2'-deoxyribonucleoside 5'-triphosphate = DNA(n+1) + diphosphate. It catalyses the reaction Endonucleolytic cleavage to 5'-phosphomonoester.. With respect to regulation, activated by host HSP70 and HSP40 in vitro to be able to bind the epsilon loop of the pgRNA. Because deletion of the RNase H region renders the protein partly chaperone-independent, the chaperones may be needed indirectly to relieve occlusion of the RNA-binding site by this domain. Inhibited by several reverse-transcriptase inhibitors: Lamivudine, Adefovir and Entecavir. Multifunctional enzyme that converts the viral RNA genome into dsDNA in viral cytoplasmic capsids. This enzyme displays a DNA polymerase activity that can copy either DNA or RNA templates, and a ribonuclease H (RNase H) activity that cleaves the RNA strand of RNA-DNA heteroduplexes in a partially processive 3'- to 5'-endonucleasic mode. Neo-synthesized pregenomic RNA (pgRNA) are encapsidated together with the P protein, and reverse-transcribed inside the nucleocapsid. Initiation of reverse-transcription occurs first by binding the epsilon loop on the pgRNA genome, and is initiated by protein priming, thereby the 5'-end of (-)DNA is covalently linked to P protein. Partial (+)DNA is synthesized from the (-)DNA template and generates the relaxed circular DNA (RC-DNA) genome. After budding and infection, the RC-DNA migrates in the nucleus, and is converted into a plasmid-like covalently closed circular DNA (cccDNA). The activity of P protein does not seem to be necessary for cccDNA generation, and is presumably released from (+)DNA by host nuclear DNA repair machinery. This is Protein P from Gibbon hepatitis B virus subtype ayw3q (isolate Hope) (HBVgbn).